Consider the following 534-residue polypeptide: 2,3-bisphosphoglycerate-independent phosphoglycerate mutase (534 aa).

Mn(2+) contacts are provided by D15 and S65. S65 serves as the catalytic Phosphoserine intermediate. Substrate is bound by residues H126, 156 to 157 (RD), R188, R194, 261 to 264 (RPDR), and K334. Mn(2+) contacts are provided by D401, H405, D442, H443, and H460.

Belongs to the BPG-independent phosphoglycerate mutase family. The cofactor is Mn(2+).

It is found in the plastid. The protein resides in the chloroplast. The catalysed reaction is (2R)-2-phosphoglycerate = (2R)-3-phosphoglycerate. It participates in carbohydrate degradation; glycolysis; pyruvate from D-glyceraldehyde 3-phosphate: step 3/5. Catalyzes the interconversion of 2-phosphoglycerate and 3-phosphoglycerate. In Pyropia yezoensis (Susabi-nori), this protein is 2,3-bisphosphoglycerate-independent phosphoglycerate mutase.